The following is a 721-amino-acid chain: Pentatricopeptide repeat-containing protein At3g49710 (721 aa).

PPR repeat units lie at residues 42–72 (STYL…TEEP), 73–103 (NVFS…IPQP), 104–138 (DTVS…GFEV), 139–169 (DGFT…SGGF), 172–202 (YSSV…MDEL), 204–238 (DEVS…GFKI), 239–273 (DMFT…GFHQ), 274–307 (NSHV…ILSP), 308–343 (DLVV…GHRP), 344–378 (DDCS…HIPS), 380–410 (RISV…MPEL), 411–445 (NAVS…GIAP), 446–476 (NKIT…MKET), and 482–512 (EAEH…MPYK). Residues 517–592 (AWAALLGACR…KPGCSWIEVK (76 aa)) are type E motif. The interval 593–623 (KKKHVFVAEDWSHPMIREVNEYLEEMMKKMK) is type E(+) motif. The segment at 624 to 721 (KVGYVMDKKW…DGKCSCGDYW (98 aa)) is type DYW motif.

The protein belongs to the PPR family. PCMP-H subfamily.

This chain is Pentatricopeptide repeat-containing protein At3g49710 (PCMP-H79), found in Arabidopsis thaliana (Mouse-ear cress).